The following is a 460-amino-acid chain: Probable Xaa-Pro aminopeptidase PEPP (460 aa).

Asp256, Asp267, Glu390, and Glu430 together coordinate Mn(2+).

Belongs to the peptidase M24B family. It depends on Mn(2+) as a cofactor.

It carries out the reaction Release of any N-terminal amino acid, including proline, that is linked to proline, even from a dipeptide or tripeptide.. Its function is as follows. Catalyzes the removal of a penultimate prolyl residue from the N-termini of peptides. The polypeptide is Probable Xaa-Pro aminopeptidase PEPP (PEPP) (Podospora anserina (strain S / ATCC MYA-4624 / DSM 980 / FGSC 10383) (Pleurage anserina)).